Consider the following 595-residue polypeptide: uncharacterized protein (595 aa).

The first 23 residues, 1-23 (MLSLSSPPWLLLLVLFFFANGSA), serve as a signal peptide directing secretion. N-linked (GlcNAc...) asparagine glycosylation is found at Asn-31, Asn-63, Asn-88, Asn-112, Asn-144, Asn-187, Asn-205, Asn-389, Asn-480, Asn-492, and Asn-506. Residues 61–83 (LENQTASSSNLNTNNEASDEQTG) are compositionally biased toward polar residues. 2 disordered regions span residues 61 to 119 (LENQ…VSSL) and 141 to 164 (TALN…TKGE). The span at 84 to 119 (NSNSNTSSHSRNINGLPSSNSNIDNANSNSSSVSSL) shows a compositional bias: low complexity.

The protein resides in the secreted. This is an uncharacterized protein from Drosophila melanogaster (Fruit fly).